A 395-amino-acid chain; its full sequence is Flap endonuclease 1 (395 aa).

The segment at 1–104 (MGIKHLYQII…GELAKRFMRK (104 aa)) is N-domain. Mg(2+) is bound at residue Asp-34. Residues Arg-47 and Arg-70 each contribute to the DNA site. Mg(2+) contacts are provided by Asp-86, Glu-158, Glu-160, Asp-179, and Asp-181. Positions 122–253 (EVEKFSRRTV…NTALKLIRDH (132 aa)) are I-domain. Position 158 (Glu-158) interacts with DNA. DNA-binding residues include Gly-231 and Asp-233. Asp-233 contacts Mg(2+). Residues 341–349 (QQSRLEGFF) are interaction with PCNA. Basic and acidic residues predominate over residues 360–389 (AVLKRKHEEKLELQKKKKKEDSKAKKEAKS). Residues 360–395 (AVLKRKHEEKLELQKKKKKEDSKAKKEAKSKPRGTT) form a disordered region.

Belongs to the XPG/RAD2 endonuclease family. FEN1 subfamily. In terms of assembly, interacts with PCNA. Three molecules of FEN1 bind to one PCNA trimer with each molecule binding to one PCNA monomer. PCNA stimulates the nuclease activity without altering cleavage specificity. The cofactor is Mg(2+). Phosphorylated. Phosphorylation upon DNA damage induces relocalization to the nuclear plasma.

Its subcellular location is the nucleus. The protein resides in the nucleolus. It localises to the nucleoplasm. The protein localises to the mitochondrion. Its function is as follows. Structure-specific nuclease with 5'-flap endonuclease and 5'-3' exonuclease activities involved in DNA replication and repair. During DNA replication, cleaves the 5'-overhanging flap structure that is generated by displacement synthesis when DNA polymerase encounters the 5'-end of a downstream Okazaki fragment. It enters the flap from the 5'-end and then tracks to cleave the flap base, leaving a nick for ligation. Also involved in the long patch base excision repair (LP-BER) pathway, by cleaving within the apurinic/apyrimidinic (AP) site-terminated flap. Acts as a genome stabilization factor that prevents flaps from equilibrating into structures that lead to duplications and deletions. Also possesses 5'-3' exonuclease activity on nicked or gapped double-stranded DNA, and exhibits RNase H activity. Also involved in replication and repair of rDNA and in repairing mitochondrial DNA. In Ajellomyces capsulatus (strain H143) (Darling's disease fungus), this protein is Flap endonuclease 1.